The primary structure comprises 1311 residues: Ubiquitin carboxyl-terminal hydrolase 36 (1311 aa).

Composition is skewed to low complexity over residues 120–134 (AAAA…SAGS) and 156–174 (STPT…SSSS). The tract at residues 120-189 (AAAATNNGNS…NPNELPKPKR (70 aa)) is disordered. Residues 212 to 533 (AGMINVGNTC…NSYIMFYELD (322 aa)) enclose the USP domain. Catalysis depends on Cys-221, which acts as the Nucleophile. Residue His-492 is the Proton acceptor of the active site. The disordered stretch occupies residues 546-575 (NGLRQLSNGHHHHQQQQQQHQQQQQQQPTV). Positions 560–572 (QQQQQHQQQQQQQ) are enriched in low complexity. Ser-581 bears the Phosphoserine mark. Disordered regions lie at residues 587-620 (TRFI…GHSQ), 640-1095 (KFQE…GCLN), and 1136-1311 (DHGD…QQQS). Low complexity-rich tracts occupy residues 605 to 616 (TTTTTATNNTTN), 660 to 716 (APAV…QQQQ), and 759 to 774 (TLTL…STPT). Thr-767 carries the phosphothreonine modification. 2 positions are modified to phosphoserine: Ser-787 and Ser-789. The span at 795-826 (SSGTPSSSTPTTTTTAAAAAASSPMQATAAAT) shows a compositional bias: low complexity. A compositionally biased stretch (basic residues) spans 836-853 (ARKRSLPDHHHHHPHHHV). A compositionally biased stretch (polar residues) spans 869–879 (PATNFNSSSSK). Residues 880–889 (QKTDAIDEIF) are compositionally biased toward basic and acidic residues. Residues 896-905 (NKKRINNKNQ) show a composition bias toward basic residues. The span at 910–920 (GDEEEDDEETL) shows a compositional bias: acidic residues. Low complexity-rich tracts occupy residues 925 to 942 (NNSS…PTTN) and 950 to 979 (VSSS…STSA). Residues 980-989 (PPSPKTPPSP) are compositionally biased toward pro residues. Phosphoserine is present on Ser-982. Thr-985 carries the phosphothreonine modification. At Ser-988 the chain carries Phosphoserine. The segment covering 1006 to 1020 (DDDDDEEEEDEDDEE) has biased composition (acidic residues). The span at 1037–1050 (PFSSQQKPTPSPST) shows a compositional bias: low complexity. Ser-1047 is subject to Phosphoserine. Thr-1050 carries the post-translational modification Phosphothreonine. Positions 1060–1081 (FNGTSSSTPHVGNGYQSEPSTP) are enriched in polar residues. Composition is skewed to low complexity over residues 1154–1176 (VVTT…TADA) and 1204–1221 (TANG…PGYN). Residues 1246–1255 (QHASSSYRSN) are compositionally biased toward polar residues. Positions 1267-1276 (GGNGGGGSGG) are enriched in gly residues.

It belongs to the peptidase C19 family. Interacts with atms/PAF1, but not with CycT.

It is found in the nucleus. The protein localises to the nucleolus. It catalyses the reaction Thiol-dependent hydrolysis of ester, thioester, amide, peptide and isopeptide bonds formed by the C-terminal Gly of ubiquitin (a 76-residue protein attached to proteins as an intracellular targeting signal).. Required for maintaining multiple types of adult stem cells, including male and female germline, epithelial follicle cell and intestinal stem cells. May function as a transcriptional repressor by continually deubiquiting histone H2B at the promoters of genes critical for cellular differentiation, thereby preventing histone H3 'Lys-4' trimethylation (H3K4). Controls selective autophagy activation by ubiquitinated proteins. This chain is Ubiquitin carboxyl-terminal hydrolase 36 (Usp36), found in Drosophila willistoni (Fruit fly).